The chain runs to 244 residues: Mast cell protease 2 (244 aa).

The N-terminal stretch at 1-18 (MQALLFLMALLLPSGAGA) is a signal peptide. Positions 19–20 (EE) are cleaved as a propeptide — activation peptide. Residues 21-242 (IIGGVEAKPH…YLPWIYKVLK (222 aa)) form the Peptidase S1 domain. A glycan (N-linked (GlcNAc...) asparagine) is linked at Asn-44. Cysteines 50 and 66 form a disulfide. Catalysis depends on charge relay system residues His-65 and Asp-109. 2 cysteine pairs are disulfide-bonded: Cys-143-Cys-208 and Cys-174-Cys-187. Ser-202 acts as the Charge relay system in catalysis.

The protein belongs to the peptidase S1 family. Granzyme subfamily. As to expression, mucosal mast cells.

This Mus musculus (Mouse) protein is Mast cell protease 2 (Mcpt2).